A 121-amino-acid chain; its full sequence is Large ribosomal subunit protein uL14 (121 aa).

This sequence belongs to the universal ribosomal protein uL14 family. As to quaternary structure, part of the 50S ribosomal subunit. Forms a cluster with proteins L3 and L19. In the 70S ribosome, L14 and L19 interact and together make contacts with the 16S rRNA in bridges B5 and B8.

Its function is as follows. Binds to 23S rRNA. Forms part of two intersubunit bridges in the 70S ribosome. This Parabacteroides distasonis (strain ATCC 8503 / DSM 20701 / CIP 104284 / JCM 5825 / NCTC 11152) protein is Large ribosomal subunit protein uL14.